The following is a 576-amino-acid chain: Arginine--tRNA ligase (576 aa).

The 'HIGH' region motif lies at 122 to 132 (PNVAKQMHVGH).

This sequence belongs to the class-I aminoacyl-tRNA synthetase family. Monomer.

The protein resides in the cytoplasm. It catalyses the reaction tRNA(Arg) + L-arginine + ATP = L-arginyl-tRNA(Arg) + AMP + diphosphate. The polypeptide is Arginine--tRNA ligase (Yersinia pseudotuberculosis serotype IB (strain PB1/+)).